The primary structure comprises 1135 residues: Retinoblastoma-like protein 2 (1135 aa).

Residues 1–43 are disordered; sequence MASGGNQSSPPPPAAAASSEEEEEDGDTADRAQPAGSPSHQIQ. Phosphoserine is present on serine 410. Phosphothreonine is present on threonine 414. The domain A stretch occupies residues 414 to 613; that stretch reads TPVSTATHSL…DRIRDNENRV (200 aa). The interval 414–1021 is pocket; binds E1A; it reads TPVSTATHSL…QTFAMKYSQA (608 aa). O-linked (GlcNAc) serine glycosylation is present at serine 417. Residues 614–824 are spacer; sequence PTCEEVTPPH…QGQPLTSSSI (211 aa). A Phosphoserine modification is found at serine 636. Threonine 639 carries the phosphothreonine modification. Disordered regions lie at residues 649-698, 806-825, and 932-995; these read DAGG…PPQP, ISPGGQQQNQGQPLTSSSIR, and RRNS…EEEE. A compositionally biased stretch (polar residues) spans 656-674; it reads SVTSPTTLYDRYSSPTVST. A phosphoserine mark is found at serine 659, serine 669, and serine 684. Residues 806–818 are compositionally biased toward low complexity; that stretch reads ISPGGQQQNQGQP. Positions 825 to 1021 are domain B; sequence RPRKTSSLSL…QTFAMKYSQA (197 aa). Polar residues-rich tracts occupy residues 935-950 and 958-969; these read SGSCENRSHQNSPTEL and DSSPVMRSNSTL. 5 positions are modified to phosphoserine: serine 942, serine 946, serine 960, serine 965, and serine 967. A Phosphothreonine modification is found at threonine 968. A compositionally biased stretch (pro residues) spans 971-981; that stretch reads VPQPSSAPPTP. Serine 975 and serine 976 each carry phosphoserine. A Phosphothreonine modification is found at threonine 980. Phosphoserine occurs at positions 1031, 1064, 1076, and 1108.

The protein belongs to the retinoblastoma protein (RB) family. Interacts with AATF, KMT5B and KMT5C. Component of the DREAM complex (also named LINC complex) at least composed of E2F4, E2F5, LIN9, LIN37, LIN52, LIN54, MYBL1, MYBL2, RBL1, RBL2, RBBP4, TFDP1 and TFDP2. The complex exists in quiescent cells where it represses cell cycle-dependent genes. It dissociates in S phase when LIN9, LIN37, LIN52 and LIN54 form a subcomplex that binds to MYBL2. Interacts with USP4. Part of the peroxisome proliferator activated receptor alpha (PPAR-alpha) interacting complex (PRIC). Interacts with RINT1. Interacts with PML. Interacts with RBBP9. Interacts with CD53. During G0 and early G1 phase of the cell cycle, phosphorylated on Ser-636 and on 5 sites within the domain B. Phosphorylation on Ser-669 in G1 leads to its ubiquitin-dependent proteolysis.

It localises to the nucleus. Functionally, key regulator of entry into cell division. Directly involved in heterochromatin formation by maintaining overall chromatin structure and, in particular, that of constitutive heterochromatin by stabilizing histone methylation. Recruits and targets histone methyltransferases KMT5B and KMT5C, leading to epigenetic transcriptional repression. Controls histone H4 'Lys-20' trimethylation. Probably acts as a transcription repressor by recruiting chromatin-modifying enzymes to promoters. Potent inhibitor of E2F-mediated trans-activation, associates preferentially with E2F5. Binds to cyclins A and E. Binds to and may be involved in the transforming capacity of the adenovirus E1A protein. May act as a tumor suppressor. The polypeptide is Retinoblastoma-like protein 2 (Rbl2) (Rattus norvegicus (Rat)).